The following is a 309-amino-acid chain: Large ribosomal subunit protein mL45 (309 aa).

This sequence belongs to the mitochondrion-specific ribosomal protein mL45 family. In terms of assembly, component of the mitochondrial ribosome large subunit (39S) which comprises a 16S rRNA and about 50 distinct proteins.

It is found in the mitochondrion. Functionally, component of the mitochondrial large ribosomal subunit (mt-LSU). Within the mitochondrial ribosomes, required to direct the nascent polypeptide toward the tunnel exit and position the exit at a distance from the membrane surface. The protein is Large ribosomal subunit protein mL45 (mrpl45) of Xenopus tropicalis (Western clawed frog).